The sequence spans 236 residues: DNA repair protein RecO (236 aa).

It belongs to the RecO family.

Its function is as follows. Involved in DNA repair and RecF pathway recombination. In Photobacterium profundum (strain SS9), this protein is DNA repair protein RecO.